The primary structure comprises 278 residues: Probable endonuclease 4 (278 aa).

Zn(2+) contacts are provided by H66, H106, E140, D172, H175, H209, D222, H224, and E254.

Belongs to the AP endonuclease 2 family. The cofactor is Zn(2+).

The catalysed reaction is Endonucleolytic cleavage to 5'-phosphooligonucleotide end-products.. Functionally, endonuclease IV plays a role in DNA repair. It cleaves phosphodiester bonds at apurinic or apyrimidinic (AP) sites, generating a 3'-hydroxyl group and a 5'-terminal sugar phosphate. The polypeptide is Probable endonuclease 4 (Haloquadratum walsbyi (strain DSM 16790 / HBSQ001)).